A 375-amino-acid chain; its full sequence is Histidine biosynthesis bifunctional protein HisB (375 aa).

The interval 1–168 (MTPILFVDRD…GIAHELADAP (168 aa)) is histidinol-phosphatase. Asp8 functions as the Nucleophile in the catalytic mechanism. 3 residues coordinate Mg(2+): Asp8, Asp10, and Asp128. The Proton donor role is filled by Asp10. The imidazoleglycerol-phosphate dehydratase stretch occupies residues 169–375 (RRAVVQRNTK…TALPSTKGAL (207 aa)).

In the N-terminal section; belongs to the histidinol-phosphatase family. It in the C-terminal section; belongs to the imidazoleglycerol-phosphate dehydratase family. Requires Mg(2+) as cofactor.

Its subcellular location is the cytoplasm. The enzyme catalyses D-erythro-1-(imidazol-4-yl)glycerol 3-phosphate = 3-(imidazol-4-yl)-2-oxopropyl phosphate + H2O. The catalysed reaction is L-histidinol phosphate + H2O = L-histidinol + phosphate. The protein operates within amino-acid biosynthesis; L-histidine biosynthesis; L-histidine from 5-phospho-alpha-D-ribose 1-diphosphate: step 6/9. It participates in amino-acid biosynthesis; L-histidine biosynthesis; L-histidine from 5-phospho-alpha-D-ribose 1-diphosphate: step 8/9. This is Histidine biosynthesis bifunctional protein HisB from Xanthomonas campestris pv. campestris (strain B100).